We begin with the raw amino-acid sequence, 400 residues long: AA13 family lytic polysaccharide monooxygenase A (400 aa).

The first 17 residues, 1–17 (MLLTVLAVVGCFTAVNG), serve as a signal peptide directing secretion. His18 provides a ligand contact to Cu(2+). At His18 the chain carries Methylhistidine. A Chitin-binding type-4 domain is found at 18–247 (HGYLTIPASR…AQVYLHCADI (230 aa)). 7 disulfides stabilise this stretch: Cys39–Cys42, Cys65–Cys244, Cys101–Cys202, Cys117–Cys144, Cys152–Cys160, Cys166–Cys172, and Cys180–Cys191. Residue His108 coordinates Cu(2+). N-linked (GlcNAc...) asparagine glycosylation is present at Asn119. Tyr241 is a Cu(2+) binding site. Residues 254 to 287 (GGTTSKSTTSTTSTTSTSRSTSTSAPTTTSSAST) form a disordered region. Over residues 257–287 (TSKSTTSTTSTTSTSRSTSTSAPTTTSSAST) the composition is skewed to low complexity. The CBM20 domain maps to 293-400 (TTQASLIPVT…TTATAAASWR (108 aa)). Asn379 is a glycosylation site (N-linked (GlcNAc...) asparagine).

This sequence belongs to the polysaccharide monooxygenase AA13 family. It depends on Cu(2+) as a cofactor. In terms of processing, O-mannosylated.

The protein localises to the secreted. It carries out the reaction starch + reduced acceptor + O2 = D-glucono-1,5-lactone-terminated malto-oligosaccharides + short-chain malto-oligosaccharides + acceptor + H2O.. Its activity is regulated as follows. Activity is inhibited by both beta-cyclodextrin or amylose that block the access to the active site. Starch-active lytic polysaccharide monooxygenase that oxidizes the C1 position of starch substrates. Catalysis by LPMOs requires the reduction of the active-site copper from Cu(II) to Cu(I) by a reducing agent and H(2)O(2) or O(2) as a cosubstrate. This chain is AA13 family lytic polysaccharide monooxygenase A, found in Aspergillus terreus (strain NIH 2624 / FGSC A1156).